The sequence spans 1048 residues: B3 domain-containing protein Os02g0598200 (1048 aa).

Residues 1-345 form a disordered region; sequence MDGAVRGQGC…QKERVASSDN (345 aa). The span at 16-25 shows a compositional bias: basic residues; sequence SFNKTKKKNR. Composition is skewed to basic and acidic residues over residues 26 to 134, 151 to 162, 169 to 214, 243 to 253, 281 to 295, and 332 to 345; these read NCSD…SDDM, KKNSRNDADEEK, CSDD…GDKK, KNMKSDGDSYK, AKER…MEMK, and LKRE…SSDN. The segment at residues 375–468 is a DNA-binding region (TF-B3 1); that stretch reads AFAFFKFVRD…TFSVRVFGID (94 aa). Positions 505-528 are disordered; sequence QYQDSEDIHDGPNVSGESPRSKEP. Residues 953–1048 constitute a DNA-binding region (TF-B3 2); that stretch reads LQFCIPSTIQ…LAFQVYITRK (96 aa).

It is found in the nucleus. This Oryza sativa subsp. japonica (Rice) protein is B3 domain-containing protein Os02g0598200.